The following is a 266-amino-acid chain: N-acetylneuraminate lyase B (266 aa).

The aceneuramate site is built by Thr51 and Thr52. Catalysis depends on Tyr143, which acts as the Proton donor. Lys173 functions as the Schiff-base intermediate with substrate in the catalytic mechanism. Aceneuramate is bound by residues Ser175, Gly197, Asp199, Glu200, and Ser216.

This sequence belongs to the DapA family. NanA subfamily. As to quaternary structure, homotetramer.

The protein localises to the cytoplasm. The catalysed reaction is aceneuramate = aldehydo-N-acetyl-D-mannosamine + pyruvate. It functions in the pathway amino-sugar metabolism; N-acetylneuraminate degradation. In terms of biological role, catalyzes the cleavage of N-acetylneuraminic acid (sialic acid) to form pyruvate and N-acetylmannosamine via a Schiff base intermediate. It prevents sialic acids from being recycled and returning to the cell surface. Involved in the N-glycolylneuraminic acid (Neu5Gc) degradation pathway. The protein is N-acetylneuraminate lyase B (npl-b) of Xenopus laevis (African clawed frog).